Here is a 482-residue protein sequence, read N- to C-terminus: MIIAAPPPQPASNQPVHVIGGGLAGSEATWQLARAGVRVVLHEMRPHRSTEAHKTDGLAELVCSNSFRSDDAANNAVGLLHAEMRRLGSLVMRAADANQVPAGGALAVDRDGFSAAVTKALAEHPLIEIRREEIAGLPPEDWGNVIVATGPLTSAALAEAVRALTDESALAFFDAIAPIVHRDSIDMSIAWFQSRYDKAGPGGSGADYLNCPMNREQYDAFVDALIAGDKVDFKDWEKDTPYFDGCLPIEVMAERGRETLRHGPMKPVGLTNPHNPTVKAYAIVQLRQDNKLGTLFNMVGFQTKLNYAAQQRVFRTIPGLENAEFARLGGLHRNTFLNSPKLLDAGLRLRAAPRLRFAGQMTGCEGYVESAGIGLVAGLSAAADALGRSMTTPPPTTALGALLGHITGGHIETIDAGPRSFQPMNINFGLFPPLAQAPTHGPDGKKLRGPEKSVAKKQALSARALADLDAWIAASLKLPAAA.

FAD is bound at residue 20-25; that stretch reads GGGLAG.

The protein belongs to the MnmG family. TrmFO subfamily. FAD is required as a cofactor.

The protein localises to the cytoplasm. It catalyses the reaction uridine(54) in tRNA + (6R)-5,10-methylene-5,6,7,8-tetrahydrofolate + NADH + H(+) = 5-methyluridine(54) in tRNA + (6S)-5,6,7,8-tetrahydrofolate + NAD(+). The enzyme catalyses uridine(54) in tRNA + (6R)-5,10-methylene-5,6,7,8-tetrahydrofolate + NADPH + H(+) = 5-methyluridine(54) in tRNA + (6S)-5,6,7,8-tetrahydrofolate + NADP(+). Its function is as follows. Catalyzes the folate-dependent formation of 5-methyl-uridine at position 54 (M-5-U54) in all tRNAs. The protein is Methylenetetrahydrofolate--tRNA-(uracil-5-)-methyltransferase TrmFO of Rhodopseudomonas palustris (strain HaA2).